The following is a 204-amino-acid chain: MTENQLYSFITMKSSLSKCKQSSSLSFPLFGLINFFLIGFFRWVSFAQLFFSRFWPLVQHQQCVSEKKSKDLEFQTSIKHEEYRDDDDDGLCREDVGMVMKSLGLSTDQENEGLQKQYSSKEVSNLFEEKEPSLEEVKQAFDVFDENRDGFIDPIDLQRVLTILGLKQGSNLENCRRMIRSFDGSKDGRIDFYGFVKFMENNFC.

EF-hand domains lie at Leu-72–Ser-106, Pro-132–Lys-167, and Ser-170–Cys-204. Residues Asp-145, Asn-147, Asp-149, and Asp-156 each coordinate Ca(2+).

Its function is as follows. Potential calcium sensor. This is Probable calcium-binding protein CML46 from Arabidopsis thaliana (Mouse-ear cress).